The following is a 188-amino-acid chain: Probable manganese efflux pump MntP (188 aa).

A run of 5 helical transmembrane segments spans residues isoleucine 3–glycine 23, leucine 66–isoleucine 86, tryptophan 106–phenylalanine 128, alanine 143–glycine 163, and isoleucine 168–glycine 188.

The protein belongs to the MntP (TC 9.B.29) family.

It is found in the cell inner membrane. Probably functions as a manganese efflux pump. This chain is Probable manganese efflux pump MntP, found in Escherichia coli O7:K1 (strain IAI39 / ExPEC).